Consider the following 453-residue polypeptide: Ribulose bisphosphate carboxylase large chain (453 aa).

A propeptide spanning residues 1–2 is cleaved from the precursor; it reads MS. An N-acetylproline modification is found at Pro3. An N6,N6,N6-trimethyllysine modification is found at Lys14. Residues Asn123 and Thr173 each contribute to the substrate site. Lys175 functions as the Proton acceptor in the catalytic mechanism. Substrate is bound at residue Lys177. Mg(2+)-binding residues include Lys201, Asp203, and Glu204. Lys201 bears the N6-carboxylysine mark. His294 serves as the catalytic Proton acceptor. Residues Arg295, His327, and Ser379 each contribute to the substrate site.

This sequence belongs to the RuBisCO large chain family. Type I subfamily. As to quaternary structure, heterohexadecamer of 8 large chains and 8 small chains; disulfide-linked. The disulfide link is formed within the large subunit homodimers. It depends on Mg(2+) as a cofactor. The disulfide bond which can form in the large chain dimeric partners within the hexadecamer appears to be associated with oxidative stress and protein turnover.

The protein resides in the plastid. It localises to the chloroplast. The catalysed reaction is 2 (2R)-3-phosphoglycerate + 2 H(+) = D-ribulose 1,5-bisphosphate + CO2 + H2O. It catalyses the reaction D-ribulose 1,5-bisphosphate + O2 = 2-phosphoglycolate + (2R)-3-phosphoglycerate + 2 H(+). RuBisCO catalyzes two reactions: the carboxylation of D-ribulose 1,5-bisphosphate, the primary event in carbon dioxide fixation, as well as the oxidative fragmentation of the pentose substrate in the photorespiration process. Both reactions occur simultaneously and in competition at the same active site. This chain is Ribulose bisphosphate carboxylase large chain, found in Hydnophytum formicarum (Ant plant).